A 438-amino-acid chain; its full sequence is Methionine aminopeptidase 2 (438 aa).

Positions 1–89 (MAAQAAPAEE…LFPNKQYPKG (89 aa)) are disordered. Basic and acidic residues predominate over residues 10–20 (ELSKLSVEETK). The segment covering 51 to 65 (AKKKKKRKPRKKKKA) has biased composition (basic residues). His191 is a binding site for substrate. Residues Asp211, Asp222, and His291 each coordinate a divalent metal cation. His299 contributes to the substrate binding site. 2 residues coordinate a divalent metal cation: Glu324 and Glu419.

It belongs to the peptidase M24A family. Methionine aminopeptidase eukaryotic type 2 subfamily. Co(2+) is required as a cofactor. It depends on Zn(2+) as a cofactor. Mn(2+) serves as cofactor. Requires Fe(2+) as cofactor.

Its subcellular location is the cytoplasm. The enzyme catalyses Release of N-terminal amino acids, preferentially methionine, from peptides and arylamides.. In terms of biological role, cotranslationally removes the N-terminal methionine from nascent proteins. The N-terminal methionine is often cleaved when the second residue in the primary sequence is small and uncharged (Met-Ala-, Cys, Gly, Pro, Ser, Thr, or Val). The polypeptide is Methionine aminopeptidase 2 (Sordaria macrospora (strain ATCC MYA-333 / DSM 997 / K(L3346) / K-hell)).